Consider the following 606-residue polypeptide: Leucine-rich repeat and immunoglobulin-like domain-containing nogo receptor-interacting protein 2 (606 aa).

The signal sequence occupies residues 1–27; it reads MLHTAIPCWQPFLGLAVVLLLMGSTIG. Residues 28–57 enclose the LRRNT domain; it reads CPARCECSAQNKSVSCHRRRLLAIPEGIPI. Topologically, residues 28–545 are extracellular; that stretch reads CPARCECSAQ…LDLKTILVST (518 aa). The N-linked (GlcNAc...) asparagine glycan is linked to Asn-38. LRR repeat units follow at residues 58 to 79, 82 to 103, 106 to 127, 130 to 151, 154 to 175, 178 to 199, 202 to 223, 226 to 247, 250 to 271, 274 to 295, 298 to 319, and 322 to 343; these read ETKI…EFIS, LLEE…AFNN, NLRS…VFTG, NLTK…MFQD, NLKS…AFSG, SLEQ…ALSH, SLIA…AFKR, HLKN…NSLY, NLTS…AFKH, YLTH…MFSD, RLQE…SFQG, and FLRV…VFSS. Asn-130 carries an N-linked (GlcNAc...) asparagine glycan. Asn-188 is a glycosylation site (N-linked (GlcNAc...) asparagine). Residues Asn-250, Asn-260, and Asn-279 are each glycosylated (N-linked (GlcNAc...) asparagine). A glycan (N-linked (GlcNAc...) asparagine) is linked at Asn-327. An LRRCT domain is found at 355–409; sequence NPLACDCRLLWLLQRQPNLQFGGQQPMCAGPDTIRERSFKDFHSTALSFYFTCKK. A disulfide bridge connects residues Cys-432 and Cys-483. Residues Asn-491, Asn-522, and Asn-527 are each glycosylated (N-linked (GlcNAc...) asparagine). The helical transmembrane segment at 546–566 threads the bilayer; sequence AMGCFTFLGVVLFCFLLLFVW. The Cytoplasmic segment spans residues 567–606; that stretch reads SRGKGKHKNSIDLEYVPRKNNGAVVEGEVAGPRRFNMKMI.

It localises to the membrane. The chain is Leucine-rich repeat and immunoglobulin-like domain-containing nogo receptor-interacting protein 2 (Lingo2) from Mus musculus (Mouse).